A 338-amino-acid chain; its full sequence is Tripartite motif-containing protein 44 (338 aa).

Disordered stretches follow at residues 1 to 25 and 72 to 162; these read MASG…EPDE and ARGD…EFDP. Acidic residues predominate over residues 95–162; sequence EAGEGIESEE…ETEAESEFDP (68 aa). The stretch at 109–153 forms a coiled coil; it reads EEESETEEESEDESEEDSEEEMEDEQESEAEEDNQEEGESEAEGE. Residues 171–212 form a B box-type zinc finger; the sequence is VAKRKCPDHGLDLSTYCQEDKQLICVLCPVIGAHHGHHLSTL. Residues Cys176, His179, Cys198, and His204 each contribute to the Zn(2+) site. Residues 257–322 adopt a coiled-coil conformation; that stretch reads QQEFKKVQKV…QLDTSNESAE (66 aa). The tract at residues 307-338 is disordered; sequence MAQAKEQLDTSNESAEPKAEGDEEEPGGTDED. Residues 327 to 338 show a composition bias toward acidic residues; sequence GDEEEPGGTDED.

As to quaternary structure, interacts (via coiled coil) with TRIM17 (via coiled coil).

Functionally, may play a role in the process of differentiation and maturation of neuronal cells. May regulate the activity of TRIM17. Is a negative regulator of PAX6 expression. This is Tripartite motif-containing protein 44 (TRIM44) from Bos taurus (Bovine).